The chain runs to 408 residues: NADH-quinone oxidoreductase subunit D (408 aa).

This sequence belongs to the complex I 49 kDa subunit family. NDH-1 is composed of 14 different subunits. Subunits NuoB, C, D, E, F, and G constitute the peripheral sector of the complex.

Its subcellular location is the cell inner membrane. It carries out the reaction a quinone + NADH + 5 H(+)(in) = a quinol + NAD(+) + 4 H(+)(out). In terms of biological role, NDH-1 shuttles electrons from NADH, via FMN and iron-sulfur (Fe-S) centers, to quinones in the respiratory chain. The immediate electron acceptor for the enzyme in this species is believed to be ubiquinone. Couples the redox reaction to proton translocation (for every two electrons transferred, four hydrogen ions are translocated across the cytoplasmic membrane), and thus conserves the redox energy in a proton gradient. The chain is NADH-quinone oxidoreductase subunit D from Campylobacter jejuni subsp. doylei (strain ATCC BAA-1458 / RM4099 / 269.97).